A 512-amino-acid chain; its full sequence is MIGEERVVRALMSVYDKTGIVEFAQALHNLGIEIISTGQTQRVLREAGIPALPVSDVTGFPEILDGRVKTLHPAIHAGLLARRDVPAHMAELAAHNLQPIDLVVVNLYPFAATIARPDVTMAEAQEQIDIGGVALLRAAAKNFPAVLVLVDPADYAGVLDGLRAGDVPLSERQRLAAKAFAHTAEYDATIAAYLRTEPLPDVLPLAWRKYQPLRYGENPHQAAALYGDFGAFFHQLHGKELSYNNILDTAAAQELIEEFPATEAAAVAIIKHTNPCGVAIAADLHRAWEAAFATDREAPFGGIIAVNRPVDIAFAEAVDEIFSEIIIAPDFAPDALALLRRKKNRRLLQSVRPITGADRWQLRSVPGGVLVQEPDHAPLVAEEWRVVTKRAPTDAEAAALRFAWRVVKHVKSNAIVYAAHDRTLGIGAGQMSRVDSSRLAVWKAQQAGIDLRGSVVASDALFPFADGVEAAIAAGATAIIQPGGSVRDEEVIAAADAAGAAMVFTGRRHFRH.

An MGS-like domain is found at 1–150 (MIGEERVVRA…KNFPAVLVLV (150 aa)).

The protein belongs to the PurH family.

It catalyses the reaction (6R)-10-formyltetrahydrofolate + 5-amino-1-(5-phospho-beta-D-ribosyl)imidazole-4-carboxamide = 5-formamido-1-(5-phospho-D-ribosyl)imidazole-4-carboxamide + (6S)-5,6,7,8-tetrahydrofolate. The enzyme catalyses IMP + H2O = 5-formamido-1-(5-phospho-D-ribosyl)imidazole-4-carboxamide. The protein operates within purine metabolism; IMP biosynthesis via de novo pathway; 5-formamido-1-(5-phospho-D-ribosyl)imidazole-4-carboxamide from 5-amino-1-(5-phospho-D-ribosyl)imidazole-4-carboxamide (10-formyl THF route): step 1/1. Its pathway is purine metabolism; IMP biosynthesis via de novo pathway; IMP from 5-formamido-1-(5-phospho-D-ribosyl)imidazole-4-carboxamide: step 1/1. This chain is Bifunctional purine biosynthesis protein PurH, found in Chloroflexus aurantiacus (strain ATCC 29366 / DSM 635 / J-10-fl).